The following is a 250-amino-acid chain: Endonuclease NucS 2 (250 aa).

The protein belongs to the NucS endonuclease family.

The protein resides in the cytoplasm. Functionally, cleaves both 3' and 5' ssDNA extremities of branched DNA structures. This chain is Endonuclease NucS 2, found in Halobacterium salinarum (strain ATCC 700922 / JCM 11081 / NRC-1) (Halobacterium halobium).